A 290-amino-acid polypeptide reads, in one-letter code: MKSLKELSLRIKNIRSVQKTTKIMQMVSAAKLLQSQKKLSNSKLYISKLHDIISSIMSSADQELLAKIFTTGDNDSYLVFIIASDRGLCGSFNSSIAKSSQEYVNKLIASSKKVDIVFLGKKAFDIGKNRFDSKSILKIENSKGITLKRVEALVDSMDLSKYDRIKVFYNKFYNTFTQKPMLETIKPWSKSSSLIDDYLTNSTIDYNYKYEPQNTEFILRSLIQNYVVTALYSALLESAASENSARMAAMESANRNTKEMLNKLALLYNCSRQAAITTDLIEVIGGAESL.

The protein belongs to the ATPase gamma chain family. In terms of assembly, F-type ATPases have 2 components, CF(1) - the catalytic core - and CF(0) - the membrane proton channel. CF(1) has five subunits: alpha(3), beta(3), gamma(1), delta(1), epsilon(1). CF(0) has three main subunits: a, b and c.

Its subcellular location is the cell membrane. In terms of biological role, produces ATP from ADP in the presence of a proton gradient across the membrane. The gamma chain is believed to be important in regulating ATPase activity and the flow of protons through the CF(0) complex. This Wolbachia sp. subsp. Brugia malayi (strain TRS) protein is ATP synthase gamma chain.